The chain runs to 656 residues: UvrABC system protein C (656 aa).

Residues 41–120 form the GIY-YIG domain; the sequence is KSSGCYLFKD…IKTNKPYFNI (80 aa). The region spanning 230–265 is the UVR domain; it reads DDLEVFLERKMNQYSNDLEFENAAKIRDQISGLKLL.

The protein belongs to the UvrC family. In terms of assembly, interacts with UvrB in an incision complex.

It is found in the cytoplasm. Functionally, the UvrABC repair system catalyzes the recognition and processing of DNA lesions. UvrC both incises the 5' and 3' sides of the lesion. The N-terminal half is responsible for the 3' incision and the C-terminal half is responsible for the 5' incision. This chain is UvrABC system protein C, found in Prochlorococcus marinus subsp. pastoris (strain CCMP1986 / NIES-2087 / MED4).